The chain runs to 163 residues: Protein VASCULATURE COMPLEXITY AND CONNECTIVITY (163 aa).

The first 27 residues, Met1–Ala27, serve as a signal peptide directing secretion. 3 consecutive transmembrane segments (helical) span residues Leu54–Gly74, Met95–Gly115, and Phe133–Val153.

It belongs to the DESIGUAL family. As to quaternary structure, interacts with OPS. As to expression, expressed in vascular cells, mostly in hypocotyls, and, to a lower extent, in seedlings, roots, flowers, siliques, developing leaves and inflorescences, but barely in mature leaves and seeds. High levels in leaf primordia.

Its subcellular location is the endoplasmic reticulum membrane. Required, together with OPS, for embryo provasculature development and cotyledon vascular complexity and connectivity. Necessary, partially redundantly with DEAL2 and DEAL3, to ensure bilateral symmetry development and early leaf margin patterning, probably via the regulation of auxin and CUC2 distribution. Regulates cell proliferation but not cell expansion. The sequence is that of Protein VASCULATURE COMPLEXITY AND CONNECTIVITY from Arabidopsis thaliana (Mouse-ear cress).